The chain runs to 436 residues: AMSH-like protease (436 aa).

An N-acetylmethionine modification is found at M1. 2 positions are modified to phosphoserine: S25 and S242. The MPN domain maps to 269-397; that stretch reads VVLPEDLCHK…IFRLTNAGML (129 aa). Residues H347, H349, D360, H362, C402, H408, and H410 each contribute to the Zn(2+) site. The short motif at 347 to 360 is the JAMM motif element; it reads HTHPTQTAFLSSVD.

Belongs to the peptidase M67C family. It depends on Zn(2+) as a cofactor. In terms of tissue distribution, ubiquitously expressed.

Inhibited by UbV(SP.1), an ubiquitin variant that also inhibits STAMBP. Zinc metalloprotease that specifically cleaves 'Lys-63'-linked polyubiquitin chains. Acts as a positive regulator of the TORC1 signaling pathway by mediating 'Lys-63'-linked deubiquitination of SESN2, thereby inhibiting SESN2-interaction with the GATOR2 complex. Does not cleave 'Lys-48'-linked polyubiquitin chains. The protein is AMSH-like protease of Homo sapiens (Human).